The chain runs to 153 residues: 3-hydroxyacyl-[acyl-carrier-protein] dehydratase FabZ (153 aa).

Residue His54 is part of the active site.

Belongs to the thioester dehydratase family. FabZ subfamily.

The protein localises to the cytoplasm. It carries out the reaction a (3R)-hydroxyacyl-[ACP] = a (2E)-enoyl-[ACP] + H2O. Involved in unsaturated fatty acids biosynthesis. Catalyzes the dehydration of short chain beta-hydroxyacyl-ACPs and long chain saturated and unsaturated beta-hydroxyacyl-ACPs. The protein is 3-hydroxyacyl-[acyl-carrier-protein] dehydratase FabZ of Shewanella sediminis (strain HAW-EB3).